The sequence spans 711 residues: Polyribonucleotide nucleotidyltransferase (711 aa).

Positions 486 and 492 each coordinate Mg(2+). Residues 553–612 enclose the KH domain; sequence PRIHTIKINPDKIKDVIGKGGSVIRALTEETGTTIEIEDDGTVKIAATDGEKAKHAIRRI. In terms of domain architecture, S1 motif spans 622–690; the sequence is GRVYNGKVTR…RQGRIRLSIK (69 aa). The tract at residues 689–711 is disordered; that stretch reads IKEATEQSQPAAAPEAPAAEQGE. Residues 694 to 711 show a composition bias toward low complexity; that stretch reads EQSQPAAAPEAPAAEQGE.

Belongs to the polyribonucleotide nucleotidyltransferase family. In terms of assembly, component of the RNA degradosome, which is a multiprotein complex involved in RNA processing and mRNA degradation. It depends on Mg(2+) as a cofactor.

Its subcellular location is the cytoplasm. It catalyses the reaction RNA(n+1) + phosphate = RNA(n) + a ribonucleoside 5'-diphosphate. Functionally, involved in mRNA degradation. Catalyzes the phosphorolysis of single-stranded polyribonucleotides processively in the 3'- to 5'-direction. In Escherichia coli O6:K15:H31 (strain 536 / UPEC), this protein is Polyribonucleotide nucleotidyltransferase.